Here is a 232-residue protein sequence, read N- to C-terminus: tRNA (guanine-N(7)-)-methyltransferase (232 aa).

Residues Glu38, Asp63, Glu90, and Asp113 each contribute to the S-adenosyl-L-methionine site. Asp113 is a catalytic residue. 2 residues coordinate substrate: Lys117 and Asp149.

This sequence belongs to the class I-like SAM-binding methyltransferase superfamily. TrmB family.

The enzyme catalyses guanosine(46) in tRNA + S-adenosyl-L-methionine = N(7)-methylguanosine(46) in tRNA + S-adenosyl-L-homocysteine. It participates in tRNA modification; N(7)-methylguanine-tRNA biosynthesis. Functionally, catalyzes the formation of N(7)-methylguanine at position 46 (m7G46) in tRNA. This Syntrophotalea carbinolica (strain DSM 2380 / NBRC 103641 / GraBd1) (Pelobacter carbinolicus) protein is tRNA (guanine-N(7)-)-methyltransferase.